The chain runs to 491 residues: Cytochrome P450 2B4 (491 aa).

Ser-128 carries the post-translational modification Phosphoserine; by PKA. Cys-436 lines the heme pocket.

It belongs to the cytochrome P450 family. Requires heme as cofactor.

The protein localises to the endoplasmic reticulum membrane. Its subcellular location is the microsome membrane. It catalyses the reaction an organic molecule + reduced [NADPH--hemoprotein reductase] + O2 = an alcohol + oxidized [NADPH--hemoprotein reductase] + H2O + H(+). Its function is as follows. Cytochromes P450 are a group of heme-thiolate monooxygenases. In liver microsomes, this enzyme is involved in an NADPH-dependent electron transport pathway. It oxidizes a variety of structurally unrelated compounds, including steroids, fatty acids, and xenobiotics. In the epoxidation of arachidonic acid it has a unique preference for the 5,6-olefin. In Oryctolagus cuniculus (Rabbit), this protein is Cytochrome P450 2B4 (CYP2B4).